Reading from the N-terminus, the 179-residue chain is Protein Syd (179 aa).

This sequence belongs to the Syd family.

It is found in the cell inner membrane. Functionally, interacts with the SecY protein in vivo. May bind preferentially to an uncomplexed state of SecY, thus functioning either as a chelating agent for excess SecY in the cell or as a regulatory factor that negatively controls the translocase function. The sequence is that of Protein Syd from Pseudoalteromonas translucida (strain TAC 125).